The chain runs to 217 residues: MIPLEHPILLESFAHIDRSVGPHNLSSQEYAIARRVIHSTADFDFLHLLRFAPDLPQAEFDPDLPEHQAIARGIESLRHGQTIVVDVNMVKQGIQGLVQRTFNNPIQTAIDFATIADPGKTRTETGMDRCIAQFPEAIYVIGNAPTALLTLCQAIAAGKAKPALVIGVPVGFIGVLEAKKALSLLPCPQIRVEGNKGGSPVAAGIVNALLMLAWREG.

Residues Ser-12 and Arg-35 each contribute to the substrate site. Residue His-38 is the Proton donor/acceptor of the active site.

This sequence belongs to the CobH/CbiC family. In terms of assembly, homodimer.

It catalyses the reaction Co-precorrin-8X = cob(II)yrinate. It functions in the pathway cofactor biosynthesis; adenosylcobalamin biosynthesis; cob(II)yrinate a,c-diamide from sirohydrochlorin (anaerobic route): step 9/10. Catalyzes the conversion of cobalt-precorrin-8 to cobyrinate. In Synechocystis sp. (strain ATCC 27184 / PCC 6803 / Kazusa), this protein is Cobalt-precorrin-8 methylmutase (cbiC).